Here is a 665-residue protein sequence, read N- to C-terminus: Syntabulin (665 aa).

Over residues 1 to 22 the composition is skewed to basic and acidic residues; sequence MGPLRESKKEQRVQHQEKEISR. Residues 1 to 271 are disordered; that stretch reads MGPLRESKKE…GVKPPNPEQY (271 aa). A sufficient for interaction with KIF5B region spans residues 2–421; it reads GPLRESKKEQ…DKLPDGLSLE (420 aa). The segment covering 35 to 52 has biased composition (low complexity); it reads PQQQQQQQNKVSPASESP. Phosphoserine is present on S54. Positions 61–77 are enriched in low complexity; that stretch reads FNPSSSGRSARTISSNS. The segment covering 85 to 101 has biased composition (polar residues); that stretch reads CPSSQSVSPVKTPSDTG. The residue at position 111 (S111) is a Phosphoserine. Over residues 141-162 the composition is skewed to low complexity; it reads GGIIKPGSEADFSSSSSTGSIS. The span at 168–180 shows a compositional bias: polar residues; it reads MSTTGNKRASFSR. Residues 225–245 are compositionally biased toward low complexity; sequence SYAPSSPSSSNSGSYKGSDCS. Residues 275 to 357 adopt a coiled-coil conformation; the sequence is LQQKEVTVRH…MRSSLADKDK (83 aa). Residues 314–421 are sufficient for interaction with STX1A; it reads REDWIEEECH…DKLPDGLSLE (108 aa). Phosphoserine is present on residues S400 and S557. The helical transmembrane segment at 609-629 threads the bilayer; sequence FLVDLLAVAAPVVPTVLWAFS.

Interacts with STX1A and KIF5B.

The protein localises to the golgi apparatus membrane. Functionally, part of a kinesin motor-adapter complex that is critical for the anterograde axonal transport of active zone components and contributes to activity-dependent presynaptic assembly during neuronal development. This chain is Syntabulin (Sybu), found in Mus musculus (Mouse).